A 306-amino-acid polypeptide reads, in one-letter code: Pyridoxal 5'-phosphate synthase subunit PdxS (306 aa).

Asp-36 serves as a coordination point for D-ribose 5-phosphate. Lys-93 serves as the catalytic Schiff-base intermediate with D-ribose 5-phosphate. Gly-165 serves as a coordination point for D-ribose 5-phosphate. Position 177 (Arg-177) interacts with D-glyceraldehyde 3-phosphate. Residues Gly-226 and 247-248 each bind D-ribose 5-phosphate; that span reads GS.

It belongs to the PdxS/SNZ family. In the presence of PdxT, forms a dodecamer of heterodimers.

It catalyses the reaction aldehydo-D-ribose 5-phosphate + D-glyceraldehyde 3-phosphate + L-glutamine = pyridoxal 5'-phosphate + L-glutamate + phosphate + 3 H2O + H(+). The protein operates within cofactor biosynthesis; pyridoxal 5'-phosphate biosynthesis. Its function is as follows. Catalyzes the formation of pyridoxal 5'-phosphate from ribose 5-phosphate (RBP), glyceraldehyde 3-phosphate (G3P) and ammonia. The ammonia is provided by the PdxT subunit. Can also use ribulose 5-phosphate and dihydroxyacetone phosphate as substrates, resulting from enzyme-catalyzed isomerization of RBP and G3P, respectively. The protein is Pyridoxal 5'-phosphate synthase subunit PdxS of Salinispora arenicola (strain CNS-205).